Reading from the N-terminus, the 427-residue chain is Light-independent protochlorophyllide reductase subunit N (427 aa).

Cys32, Cys57, and Cys118 together coordinate [4Fe-4S] cluster.

It belongs to the BchN/ChlN family. As to quaternary structure, protochlorophyllide reductase is composed of three subunits; BchL, BchN and BchB. Forms a heterotetramer of two BchB and two BchN subunits. [4Fe-4S] cluster is required as a cofactor.

It carries out the reaction chlorophyllide a + oxidized 2[4Fe-4S]-[ferredoxin] + 2 ADP + 2 phosphate = protochlorophyllide a + reduced 2[4Fe-4S]-[ferredoxin] + 2 ATP + 2 H2O. It participates in porphyrin-containing compound metabolism; bacteriochlorophyll biosynthesis (light-independent). Its function is as follows. Component of the dark-operative protochlorophyllide reductase (DPOR) that uses Mg-ATP and reduced ferredoxin to reduce ring D of protochlorophyllide (Pchlide) to form chlorophyllide a (Chlide). This reaction is light-independent. The NB-protein (BchN-BchB) is the catalytic component of the complex. The polypeptide is Light-independent protochlorophyllide reductase subunit N (Rubrivivax gelatinosus (strain NBRC 100245 / IL144)).